The sequence spans 452 residues: COP9 signalosome complex subunit 11 (452 aa).

Residues 205 to 374 (FYIEDPKTMM…ISYSKRSIVD (170 aa)) form the PCI domain.

Component of a COP9 signalosome-like (CSN) complex.

The protein localises to the cytoplasm. Its subcellular location is the nucleus. In terms of biological role, component of the COP9 signalosome (CSN) complex that acts as an regulator of the ubiquitin (Ubl) conjugation pathway by mediating the deneddylation of the cullin subunit of SCF-type E3 ubiquitin-protein ligase complexes The CSN complex is involved in the regulation of the mating pheromone response. PCI8 may also be involved in transcriptional and translational control. This chain is COP9 signalosome complex subunit 11 (PCI8), found in Candida glabrata (strain ATCC 2001 / BCRC 20586 / JCM 3761 / NBRC 0622 / NRRL Y-65 / CBS 138) (Yeast).